An 86-amino-acid polypeptide reads, in one-letter code: DNA-directed RNA polymerase subunit omega (86 aa).

Belongs to the RNA polymerase subunit omega family. The RNAP catalytic core consists of 2 alpha, 1 beta, 1 beta' and 1 omega subunit. When a sigma factor is associated with the core the holoenzyme is formed, which can initiate transcription.

It catalyses the reaction RNA(n) + a ribonucleoside 5'-triphosphate = RNA(n+1) + diphosphate. Its function is as follows. Promotes RNA polymerase assembly. Latches the N- and C-terminal regions of the beta' subunit thereby facilitating its interaction with the beta and alpha subunits. The sequence is that of DNA-directed RNA polymerase subunit omega from Psychrobacter arcticus (strain DSM 17307 / VKM B-2377 / 273-4).